Consider the following 487-residue polypeptide: ATP-dependent 6-phosphofructokinase (487 aa).

ATP-binding positions include Gly-107, 173 to 174, 198 to 201, and Lys-226; these read RG and GDGT. Asp-199 provides a ligand contact to Mg(2+). Residues 227–229, 272–274, and Glu-325 each bind substrate; these read TID and MGR. The active-site Proton acceptor is the Asp-229. Residue 341-343 coordinates ATP; that stretch reads SGN. A substrate-binding site is contributed by 380–383; that stretch reads YMIR. Positions 485–487 match the Peroxisomal targeting signal motif; sequence AKL.

The protein belongs to the phosphofructokinase type A (PFKA) family. PPi-dependent PFK group II subfamily. Atypical ATP-dependent clade 'X' sub-subfamily. As to quaternary structure, homotetramer. Mg(2+) serves as cofactor.

The protein resides in the glycosome. It catalyses the reaction beta-D-fructose 6-phosphate + ATP = beta-D-fructose 1,6-bisphosphate + ADP + H(+). It participates in carbohydrate degradation; glycolysis; D-glyceraldehyde 3-phosphate and glycerone phosphate from D-glucose: step 3/4. With respect to regulation, allosterically activated by AMP. Its function is as follows. Catalyzes the phosphorylation of D-fructose 6-phosphate to fructose 1,6-bisphosphate by ATP, the first committing step of glycolysis. The chain is ATP-dependent 6-phosphofructokinase from Trypanosoma brucei brucei.